We begin with the raw amino-acid sequence, 481 residues long: Cobyric acid synthase (481 aa).

The region spanning 248–435 (NTVIAVPMLP…LHGLFHGGAF (188 aa)) is the GATase cobBQ-type domain. Catalysis depends on Cys329, which acts as the Nucleophile. His427 is a catalytic residue.

It belongs to the CobB/CobQ family. CobQ subfamily.

It participates in cofactor biosynthesis; adenosylcobalamin biosynthesis. Functionally, catalyzes amidations at positions B, D, E, and G on adenosylcobyrinic A,C-diamide. NH(2) groups are provided by glutamine, and one molecule of ATP is hydrogenolyzed for each amidation. The polypeptide is Cobyric acid synthase (Granulibacter bethesdensis (strain ATCC BAA-1260 / CGDNIH1)).